Here is a 529-residue protein sequence, read N- to C-terminus: Endoglucanase 21 (529 aa).

The N-terminal stretch at 1-24 (MVAAMTMCAAVAVLLVLTSTMAAA) is a signal peptide. The Nucleophile role is filled by Asp89. The N-linked (GlcNAc...) asparagine glycan is linked to Asn342. Active-site residues include His429, Asp481, and Glu490.

It belongs to the glycosyl hydrolase 9 (cellulase E) family. Expressed in roots and flowers.

The protein localises to the secreted. It carries out the reaction Endohydrolysis of (1-&gt;4)-beta-D-glucosidic linkages in cellulose, lichenin and cereal beta-D-glucans.. The protein is Endoglucanase 21 (GLU9) of Oryza sativa subsp. japonica (Rice).